The following is a 953-amino-acid chain: Ubiquitin carboxyl-terminal hydrolase CYLD (953 aa).

An interaction with TRIP region spans residues 106–590 (CEERFSLFKN…FEIMIGKKKG (485 aa)). CAP-Gly domains follow at residues 153-198 (LAER…VFVA) and 253-286 (DVLP…VQLC). Disordered regions lie at residues 313–349 (PPKL…RNRS) and 384–410 (SLTE…LSSE). The segment covering 337-346 (TGSTSDPGTR) has biased composition (polar residues). Ser384, Ser415, and Ser419 each carry phosphoserine. The interaction with TRAF2 stretch occupies residues 391–466 (DFGHASPPLQ…LAVSSGNSHG (76 aa)). The interaction with IKBKG/NEMO stretch occupies residues 467-681 (LEVGSLAEVK…FTSEEKDPEE (215 aa)). Positions 489–532 (GQPPGLNEVLAGLELEDECAGCTDGTFRGTRYFTCALKKALFVK) constitute a CAP-Gly 3 domain. Residues 589 to 947 (KGIQGHYNSC…DAYMCMYQSP (359 aa)) enclose the USP domain. The Nucleophile role is filled by Cys598. Residues 778–830 (LEDTPRQCRICGGLAMYECRECYDDPDISAGKIKQFCKTCNAQVHLHPKRLNH) are B-box. Zn(2+) contacts are provided by Cys785, Cys788, Cys796, Cys799, Cys814, Cys817, His822, and His830. Residue His868 is the Proton acceptor of the active site.

This sequence belongs to the peptidase C19 family. Interacts (via CAP-Gly domain) with IKBKG/NEMO (via proline-rich C-terminal region). Interacts with TRAF2 and TRIP. Interacts with PLK1, DVL1, DVL3, MAVS, TBK1, IKKE and RIGI. Interacts (via CAP-Gly domain) with microtubules. Interacts with HDAC6 and BCL3. Interacts with MAP3K7. Identified in a complex with TRAF6 and SQSTM1. Interacts with OPTN and SQSTM1. Interacts with CEP350. Interacts with RNF31; the interaction is indirect and is mediated via SPATA2. Interacts with SPATA2 (via the PUB domain); the interaction is direct and recruits CYLD to the LUBAC complex, thereby regulating TNF-alpha-induced necroptosis. In terms of processing, phosphorylated on several serine residues by IKKA and/or IKKB in response to immune stimuli. Phosphorylation requires IKBKG. Phosphorylation abolishes TRAF2 deubiquitination, interferes with the activation of Jun kinases, and strongly reduces CD40-dependent gene activation by NF-kappa-B. Post-translationally, ubiquitinated. Polyubiquitinated in hepatocytes treated with palmitic acid. Ubiquitination is mediated by E3 ligase TRIM47 and leads to proteasomal degradation.

The protein localises to the cytoplasm. Its subcellular location is the perinuclear region. It localises to the cytoskeleton. It is found in the cell membrane. The protein resides in the microtubule organizing center. The protein localises to the centrosome. Its subcellular location is the spindle. It localises to the cilium basal body. It catalyses the reaction Thiol-dependent hydrolysis of ester, thioester, amide, peptide and isopeptide bonds formed by the C-terminal Gly of ubiquitin (a 76-residue protein attached to proteins as an intracellular targeting signal).. In terms of biological role, deubiquitinase that specifically cleaves 'Lys-63'- and linear 'Met-1'-linked polyubiquitin chains and is involved in NF-kappa-B activation and TNF-alpha-induced necroptosis. Negatively regulates NF-kappa-B activation by deubiquitinating upstream signaling factors. Contributes to the regulation of cell survival, proliferation and differentiation via its effects on NF-kappa-B activation. Negative regulator of Wnt signaling. Inhibits HDAC6 and thereby promotes acetylation of alpha-tubulin and stabilization of microtubules. Plays a role in the regulation of microtubule dynamics, and thereby contributes to the regulation of cell proliferation, cell polarization, cell migration, and angiogenesis. Required for normal cell cycle progress and normal cytokinesis. Inhibits nuclear translocation of NF-kappa-B. Plays a role in the regulation of inflammation and the innate immune response, via its effects on NF-kappa-B activation. Dispensable for the maturation of intrathymic natural killer cells, but required for the continued survival of immature natural killer cells. Negatively regulates TNFRSF11A signaling and osteoclastogenesis. Involved in the regulation of ciliogenesis, allowing ciliary basal bodies to migrate and dock to the plasma membrane; this process does not depend on NF-kappa-B activation. Ability to remove linear ('Met-1'-linked) polyubiquitin chains regulates innate immunity and TNF-alpha-induced necroptosis: recruited to the LUBAC complex via interaction with SPATA2 and restricts linear polyubiquitin formation on target proteins. Regulates innate immunity by restricting linear polyubiquitin formation on RIPK2 in response to NOD2 stimulation. Involved in TNF-alpha-induced necroptosis by removing linear ('Met-1'-linked) polyubiquitin chains from RIPK1, thereby regulating the kinase activity of RIPK1. Negatively regulates intestinal inflammation by removing 'Lys-63' linked polyubiquitin chain of NLRP6, thereby reducing the interaction between NLRP6 and PYCARD/ASC and formation of the NLRP6 inflammasome. Does not catalyze deubiquitination of heterotypic 'Lys-63'-/'Lys-48'-linked branched ubiquitin chains. Removes 'Lys-63' linked polyubiquitin chain of MAP3K7, which inhibits phosphorylation and blocks downstream activation of the JNK-p38 kinase cascades. Also removes 'Lys-63'-linked polyubiquitin chains of MAP3K1 and MA3P3K3, which inhibit their interaction with MAP2K1 and MAP2K2. The polypeptide is Ubiquitin carboxyl-terminal hydrolase CYLD (CYLD) (Bos taurus (Bovine)).